A 32-amino-acid chain; its full sequence is Calcitonin-2 (32 aa).

Cysteines 1 and 7 form a disulfide. Pro-32 is modified (proline amide).

The protein belongs to the calcitonin family.

It is found in the secreted. Its function is as follows. Causes a rapid but short-lived drop in the level of calcium and phosphate in blood by promoting the incorporation of those ions in the bones. The polypeptide is Calcitonin-2 (Oncorhynchus gorbuscha (Pink salmon)).